A 401-amino-acid polypeptide reads, in one-letter code: E3 ubiquitin-protein ligase RGLG4 (401 aa).

Positions 1–43 (MTMGNFLKRFGSGKSRSSRNMTLGTTSSQSHEPSPSDPSLSLA) are disordered. Low complexity predominate over residues 8–19 (KRFGSGKSRSSR). Residues 20–32 (NMTLGTTSSQSHE) are compositionally biased toward polar residues. Residues 79–299 (NLILGVDFTK…KETAFALAAL (221 aa)) enclose the VWFA domain. Positions 326-350 (VPRPPPIPYTPPTNAELPSTASPAS) are disordered. The span at 327-336 (PRPPPIPYTP) shows a compositional bias: pro residues. Over residues 341-350 (ELPSTASPAS) the composition is skewed to polar residues. Residues 357-390 (CPICLTNRKDVAFSCGHMTCGDCGSKISNCPICR) form an RING-type zinc finger.

Interacts with UBC30, GRXS17 and GLB3. Widely expressed.

The protein resides in the cytoplasm. It localises to the nucleus. It catalyses the reaction S-ubiquitinyl-[E2 ubiquitin-conjugating enzyme]-L-cysteine + [acceptor protein]-L-lysine = [E2 ubiquitin-conjugating enzyme]-L-cysteine + N(6)-ubiquitinyl-[acceptor protein]-L-lysine.. In terms of biological role, possesses E3 ubiquitin-protein ligase in vitro. Acts as upstream modulator of jasmonate (JA) signaling in response to various stimuli, such as JA-inhibited root growth, JA-inductive gene expression, coronatine-mediated pathogen susceptibility, wound-stimulated expression of JA-responsive genes and wound-induced JA biosynthesis. Controls fumonisin B1 (FB1)-triggered programmed cell death (PCD) by modulating the JA signaling pathway. May mediate salicylic acid (SA) suppression of JA signaling in FB1-induced responses. May mediate the formation of 'Lys-48'-linked multiubiquitin chains. Mediates the polyubiquitination and subsequent proteasomal degradation of the target protein GRXS17. The chain is E3 ubiquitin-protein ligase RGLG4 from Arabidopsis thaliana (Mouse-ear cress).